We begin with the raw amino-acid sequence, 89 residues long: Small ribosomal subunit protein uS15 (89 aa).

The protein belongs to the universal ribosomal protein uS15 family. As to quaternary structure, part of the 30S ribosomal subunit. Forms a bridge to the 50S subunit in the 70S ribosome, contacting the 23S rRNA.

Its function is as follows. One of the primary rRNA binding proteins, it binds directly to 16S rRNA where it helps nucleate assembly of the platform of the 30S subunit by binding and bridging several RNA helices of the 16S rRNA. Functionally, forms an intersubunit bridge (bridge B4) with the 23S rRNA of the 50S subunit in the ribosome. This Chlamydia muridarum (strain MoPn / Nigg) protein is Small ribosomal subunit protein uS15.